The following is a 209-amino-acid chain: Protein GrpE (209 aa).

Composition is skewed to basic and acidic residues over residues 1 to 16 (MKKSTKKESTHSKEES) and 34 to 44 (KAGEKTAEPEK). The tract at residues 1 to 61 (MKKSTKKEST…EKSPEAACRE (61 aa)) is disordered.

It belongs to the GrpE family. Homodimer.

The protein resides in the cytoplasm. Functionally, participates actively in the response to hyperosmotic and heat shock by preventing the aggregation of stress-denatured proteins, in association with DnaK and GrpE. It is the nucleotide exchange factor for DnaK and may function as a thermosensor. Unfolded proteins bind initially to DnaJ; upon interaction with the DnaJ-bound protein, DnaK hydrolyzes its bound ATP, resulting in the formation of a stable complex. GrpE releases ADP from DnaK; ATP binding to DnaK triggers the release of the substrate protein, thus completing the reaction cycle. Several rounds of ATP-dependent interactions between DnaJ, DnaK and GrpE are required for fully efficient folding. The chain is Protein GrpE from Methanosarcina acetivorans (strain ATCC 35395 / DSM 2834 / JCM 12185 / C2A).